Consider the following 413-residue polypeptide: Putative F-box/kelch-repeat protein At4g22430 (413 aa).

In terms of domain architecture, F-box spans 5–54 (NNTITDVLEGIVTEILVRLPLRSISRFKSVSQTWKSAIESVYFRRLFVSL). The Kelch repeat unit spans residues 168-210 (NMFLNKGEMYMPLYVYSSETGFWIHKEVVCPVRLPNFYDPISL).

This is Putative F-box/kelch-repeat protein At4g22430 from Arabidopsis thaliana (Mouse-ear cress).